The chain runs to 277 residues: MEMO1 family protein MTH_45 (277 aa).

It belongs to the MEMO1 family.

This chain is MEMO1 family protein MTH_45, found in Methanothermobacter thermautotrophicus (strain ATCC 29096 / DSM 1053 / JCM 10044 / NBRC 100330 / Delta H) (Methanobacterium thermoautotrophicum).